The primary structure comprises 183 residues: MNREQIADALRQNQVVAYPTEAVFGLGCNPQSESAVKKLLDLKQRPVEKGLILVAPSLDFFRPFVDFEQINDEQLSRLQGKYERPTTWIVPAKSTTPHFLTGKFDSIAIRLCDHPSVKALCELTGFALTSTSANLTGEPPCRTADEVRLQFGSDFPVLNEMVGRAHNPSEIRDLRTNQLFRQG.

One can recognise a YrdC-like domain in the interval 1 to 183 (MNREQIADAL…LRTNQLFRQG (183 aa)).

Belongs to the SUA5 family. TsaC subfamily.

It is found in the cytoplasm. It catalyses the reaction L-threonine + hydrogencarbonate + ATP = L-threonylcarbamoyladenylate + diphosphate + H2O. Required for the formation of a threonylcarbamoyl group on adenosine at position 37 (t(6)A37) in tRNAs that read codons beginning with adenine. Catalyzes the conversion of L-threonine, HCO(3)(-)/CO(2) and ATP to give threonylcarbamoyl-AMP (TC-AMP) as the acyladenylate intermediate, with the release of diphosphate. The chain is Threonylcarbamoyl-AMP synthase from Haemophilus influenzae (strain ATCC 51907 / DSM 11121 / KW20 / Rd).